A 1109-amino-acid polypeptide reads, in one-letter code: Hybrid signal transduction histidine kinase F (1109 aa).

Residues 237–289 (LSTETTITKKNGEKYPAEVFVKEISDIHSNSIGIMIIVRDITDQIRLKEMNIE) form the PAC domain. The Histidine kinase domain maps to 324 to 547 (TISHEIRTPL…LFSVTLNFEQ (224 aa)). The residue at position 327 (His-327) is a Phosphohistidine; by autocatalysis. The stretch at 719–760 (SNLIQTISQIDNQQQQQQQQLQQQEQEQQHQQQQLQQEQQFV) forms a coiled coil. The span at 739–758 (LQQQEQEQQHQQQQLQQEQQ) shows a compositional bias: low complexity. Residues 739-819 (LQQQEQEQQH…TSSDSGESDE (81 aa)) form a disordered region. Over residues 767 to 782 (DSSEKKTTPKKDRGKY) the composition is skewed to basic and acidic residues. In terms of domain architecture, Response regulatory spans 928–1048 (RILLVDDNAV…PLGELVKKYL (121 aa)). Asp-977 is subject to 4-aspartylphosphate. The segment covering 1052-1099 (NNNNNNNNNNNNNNNNNSNNNNSNSNSNPNSNSNSNSNSNSNPNQNPN) has biased composition (low complexity). Positions 1052–1109 (NNNNNNNNNNNNNNNNNSNNNNSNSNSNPNSNSNSNSNSNSNPNQNPNYCNNLPTDFI) are disordered. The segment covering 1100–1109 (YCNNLPTDFI) has biased composition (polar residues).

The catalysed reaction is ATP + protein L-histidine = ADP + protein N-phospho-L-histidine.. In terms of biological role, acts as a receptor histidine kinase for a signal transduction pathway. This protein undergoes an ATP-dependent autophosphorylation at a conserved histidine residue in the kinase core, and a phosphoryl group is then transferred to a conserved aspartate residue in the receiver domain. This Dictyostelium discoideum (Social amoeba) protein is Hybrid signal transduction histidine kinase F (dhkF).